Reading from the N-terminus, the 367-residue chain is MKEPLDLSKYAVRTDLAVEAHQMLQERQQENTGIQGVIIKEREEEGMTITKVTIDESASEAMGKKAGNYLTLEVQGIRQQDTELQRKVERIFAKEFAYFLEEIGVKKEASCLIVGLGNWNVTPDALGPIVVENVLVTRHLFKLQPESVEDGYRPVSAIRPGVMGITGIETSDVIFGIIEKTKPDFVIAIDALAARSIERVNSTIQISDTGIHPGSGVGNKRKELSQETLGIPVIAIGVPTVVDAVSITSDTIDFILKHFGREMKEGDKPSRSLLPAGFTFGEKKKLTEEDMPDEKSRNMFLGAVGMLEEEEKRKLIYEVLAPLGHNLMVTPKEVDAFIEDMANVIASGLNAALHHQIDQDNTGAYTH.

The propeptide occupies 1-15 (MKEPLDLSKYAVRTD).

The protein belongs to the peptidase A25 family. As to quaternary structure, homotetramer. In terms of processing, autoproteolytically processed. The inactive tetrameric zymogen termed p46 autoprocesses to a smaller form termed p41, which is active only during spore germination.

The enzyme catalyses Endopeptidase action with P4 Glu or Asp, P1 preferably Glu &gt; Asp, P1' hydrophobic and P2' Ala.. Its function is as follows. Initiates the rapid degradation of small, acid-soluble proteins during spore germination. The chain is Germination protease from Bacillus cytotoxicus (strain DSM 22905 / CIP 110041 / 391-98 / NVH 391-98).